A 126-amino-acid polypeptide reads, in one-letter code: Small ribosomal subunit protein uS13 (126 aa).

Residues leucine 99–lysine 126 form a disordered region. Positions alanine 108–lysine 126 are enriched in basic residues.

This sequence belongs to the universal ribosomal protein uS13 family. As to quaternary structure, part of the 30S ribosomal subunit. Forms a loose heterodimer with protein S19. Forms two bridges to the 50S subunit in the 70S ribosome.

In terms of biological role, located at the top of the head of the 30S subunit, it contacts several helices of the 16S rRNA. In the 70S ribosome it contacts the 23S rRNA (bridge B1a) and protein L5 of the 50S subunit (bridge B1b), connecting the 2 subunits; these bridges are implicated in subunit movement. Contacts the tRNAs in the A and P-sites. The protein is Small ribosomal subunit protein uS13 of Porphyromonas gingivalis (strain ATCC 33277 / DSM 20709 / CIP 103683 / JCM 12257 / NCTC 11834 / 2561).